Reading from the N-terminus, the 395-residue chain is Putative 8-amino-7-oxononanoate synthase (395 aa).

Arg-23 lines the substrate pocket. 110–111 (GF) contacts pyridoxal 5'-phosphate. Position 135 (His-135) interacts with substrate. Pyridoxal 5'-phosphate contacts are provided by residues Ser-182, 207-210 (DEAH), and 239-242 (TFSK). Lys-242 carries the post-translational modification N6-(pyridoxal phosphate)lysine. Position 356 (Thr-356) interacts with substrate.

Belongs to the class-II pyridoxal-phosphate-dependent aminotransferase family. BioF subfamily. Homodimer. Pyridoxal 5'-phosphate serves as cofactor.

It catalyses the reaction 6-carboxyhexanoyl-[ACP] + L-alanine + H(+) = (8S)-8-amino-7-oxononanoate + holo-[ACP] + CO2. Its pathway is cofactor biosynthesis; biotin biosynthesis. Its function is as follows. Catalyzes the decarboxylative condensation of pimeloyl-[acyl-carrier protein] and L-alanine to produce 8-amino-7-oxononanoate (AON), [acyl-carrier protein], and carbon dioxide. The chain is Putative 8-amino-7-oxononanoate synthase (bioF) from Bacillus thuringiensis subsp. konkukian (strain 97-27).